The sequence spans 447 residues: Ribosomal protein uS12 methylthiotransferase RimO (447 aa).

One can recognise an MTTase N-terminal domain in the interval 10–120; it reads PKVGFVSLGC…VVNAVHDVVP (111 aa). The [4Fe-4S] cluster site is built by Cys19, Cys55, Cys84, Cys153, Cys157, and Cys160. Residues 139–377 form the Radical SAM core domain; it reads LTPRHYAYLK…MAHQQAISAA (239 aa). The TRAM domain maps to 380–447; sequence QMKIGKEIEV…DEYDLWAEML (68 aa).

It belongs to the methylthiotransferase family. RimO subfamily. Requires [4Fe-4S] cluster as cofactor.

It is found in the cytoplasm. It carries out the reaction L-aspartate(89)-[ribosomal protein uS12]-hydrogen + (sulfur carrier)-SH + AH2 + 2 S-adenosyl-L-methionine = 3-methylsulfanyl-L-aspartate(89)-[ribosomal protein uS12]-hydrogen + (sulfur carrier)-H + 5'-deoxyadenosine + L-methionine + A + S-adenosyl-L-homocysteine + 2 H(+). Catalyzes the methylthiolation of an aspartic acid residue of ribosomal protein uS12. The chain is Ribosomal protein uS12 methylthiotransferase RimO from Pseudomonas syringae pv. syringae (strain B728a).